The chain runs to 103 residues: Co-chaperonin GroES (103 aa).

Belongs to the GroES chaperonin family. In terms of assembly, heptamer of 7 subunits arranged in a ring. Interacts with the chaperonin GroEL.

The protein localises to the cytoplasm. Functionally, together with the chaperonin GroEL, plays an essential role in assisting protein folding. The GroEL-GroES system forms a nano-cage that allows encapsulation of the non-native substrate proteins and provides a physical environment optimized to promote and accelerate protein folding. GroES binds to the apical surface of the GroEL ring, thereby capping the opening of the GroEL channel. The sequence is that of Co-chaperonin GroES from Prochlorococcus marinus (strain SARG / CCMP1375 / SS120).